A 287-amino-acid chain; its full sequence is ATP synthase gamma chain (287 aa).

This sequence belongs to the ATPase gamma chain family. In terms of assembly, F-type ATPases have 2 components, CF(1) - the catalytic core - and CF(0) - the membrane proton channel. CF(1) has five subunits: alpha(3), beta(3), gamma(1), delta(1), epsilon(1). CF(0) has three main subunits: a, b and c.

The protein resides in the cell membrane. In terms of biological role, produces ATP from ADP in the presence of a proton gradient across the membrane. The gamma chain is believed to be important in regulating ATPase activity and the flow of protons through the CF(0) complex. In Halothermothrix orenii (strain H 168 / OCM 544 / DSM 9562), this protein is ATP synthase gamma chain.